The chain runs to 264 residues: S-adenosylmethionine decarboxylase proenzyme (264 aa).

Catalysis depends on S113, which acts as the Schiff-base intermediate with substrate; via pyruvic acid. The residue at position 113 (S113) is a Pyruvic acid (Ser); by autocatalysis. H118 (proton acceptor; for processing activity) is an active-site residue. C141 (proton donor; for catalytic activity) is an active-site residue.

Belongs to the prokaryotic AdoMetDC family. Type 2 subfamily. Heterooctamer of four alpha and four beta chains arranged as a tetramer of alpha/beta heterodimers. Requires pyruvate as cofactor. In terms of processing, is synthesized initially as an inactive proenzyme. Formation of the active enzyme involves a self-maturation process in which the active site pyruvoyl group is generated from an internal serine residue via an autocatalytic post-translational modification. Two non-identical subunits are generated from the proenzyme in this reaction, and the pyruvate is formed at the N-terminus of the alpha chain, which is derived from the carboxyl end of the proenzyme. The post-translation cleavage follows an unusual pathway, termed non-hydrolytic serinolysis, in which the side chain hydroxyl group of the serine supplies its oxygen atom to form the C-terminus of the beta chain, while the remainder of the serine residue undergoes an oxidative deamination to produce ammonia and the pyruvoyl group blocking the N-terminus of the alpha chain.

The enzyme catalyses S-adenosyl-L-methionine + H(+) = S-adenosyl 3-(methylsulfanyl)propylamine + CO2. It participates in amine and polyamine biosynthesis; S-adenosylmethioninamine biosynthesis; S-adenosylmethioninamine from S-adenosyl-L-methionine: step 1/1. Functionally, catalyzes the decarboxylation of S-adenosylmethionine to S-adenosylmethioninamine (dcAdoMet), the propylamine donor required for the synthesis of the polyamines spermine and spermidine from the diamine putrescine. This is S-adenosylmethionine decarboxylase proenzyme from Xanthomonas euvesicatoria pv. vesicatoria (strain 85-10) (Xanthomonas campestris pv. vesicatoria).